Consider the following 283-residue polypeptide: Glutamate racemase (283 aa).

Residues 28–29 (DS) and 60–61 (YG) each bind substrate. Residue cysteine 92 is the Proton donor/acceptor of the active site. 93–94 (NT) is a binding site for substrate. Cysteine 204 (proton donor/acceptor) is an active-site residue. Position 205 to 206 (205 to 206 (TH)) interacts with substrate.

The protein belongs to the aspartate/glutamate racemases family.

It carries out the reaction L-glutamate = D-glutamate. It participates in cell wall biogenesis; peptidoglycan biosynthesis. Its function is as follows. Provides the (R)-glutamate required for cell wall biosynthesis. The protein is Glutamate racemase of Klebsiella pneumoniae (strain 342).